A 279-amino-acid chain; its full sequence is Protein NipSnap homolog 1 (279 aa).

The protein belongs to the NipSnap family.

It is found in the mitochondrion matrix. In terms of biological role, protein involved in mitophagy. Accumulates on the mitochondria surface in response to mitochondrial depolarization and acts as a 'eat me' signal by recruiting proteins involved in selective autophagy. This is Protein NipSnap homolog 1 from Danio rerio (Zebrafish).